Reading from the N-terminus, the 73-residue chain is Protein SlyX homolog (73 aa).

This sequence belongs to the SlyX family.

In Haemophilus ducreyi (strain 35000HP / ATCC 700724), this protein is Protein SlyX homolog.